Consider the following 404-residue polypeptide: Probable tRNA sulfurtransferase (404 aa).

A THUMP domain is found at 61 to 166 (EAVSERLKDV…SGYSYIMCDE (106 aa)). ATP-binding positions include 184-185 (LL), 209-210 (HF), Arg266, Gly288, and Gln297.

Belongs to the ThiI family.

The protein resides in the cytoplasm. It catalyses the reaction [ThiI sulfur-carrier protein]-S-sulfanyl-L-cysteine + a uridine in tRNA + 2 reduced [2Fe-2S]-[ferredoxin] + ATP + H(+) = [ThiI sulfur-carrier protein]-L-cysteine + a 4-thiouridine in tRNA + 2 oxidized [2Fe-2S]-[ferredoxin] + AMP + diphosphate. It carries out the reaction [ThiS sulfur-carrier protein]-C-terminal Gly-Gly-AMP + S-sulfanyl-L-cysteinyl-[cysteine desulfurase] + AH2 = [ThiS sulfur-carrier protein]-C-terminal-Gly-aminoethanethioate + L-cysteinyl-[cysteine desulfurase] + A + AMP + 2 H(+). The protein operates within cofactor biosynthesis; thiamine diphosphate biosynthesis. Functionally, catalyzes the ATP-dependent transfer of a sulfur to tRNA to produce 4-thiouridine in position 8 of tRNAs, which functions as a near-UV photosensor. Also catalyzes the transfer of sulfur to the sulfur carrier protein ThiS, forming ThiS-thiocarboxylate. This is a step in the synthesis of thiazole, in the thiamine biosynthesis pathway. The sulfur is donated as persulfide by IscS. The chain is Probable tRNA sulfurtransferase from Bacillus cereus (strain ATCC 10987 / NRS 248).